The primary structure comprises 276 residues: 1-(5-phosphoribosyl)-5-[(5-phosphoribosylamino)methylideneamino] imidazole-4-carboxamide isomerase (276 aa).

The protein belongs to the HisA/HisF family.

The protein resides in the cytoplasm. It catalyses the reaction 1-(5-phospho-beta-D-ribosyl)-5-[(5-phospho-beta-D-ribosylamino)methylideneamino]imidazole-4-carboxamide = 5-[(5-phospho-1-deoxy-D-ribulos-1-ylimino)methylamino]-1-(5-phospho-beta-D-ribosyl)imidazole-4-carboxamide. It participates in amino-acid biosynthesis; L-histidine biosynthesis; L-histidine from 5-phospho-alpha-D-ribose 1-diphosphate: step 4/9. The polypeptide is 1-(5-phosphoribosyl)-5-[(5-phosphoribosylamino)methylideneamino] imidazole-4-carboxamide isomerase (HIS6) (Debaryomyces hansenii (strain ATCC 36239 / CBS 767 / BCRC 21394 / JCM 1990 / NBRC 0083 / IGC 2968) (Yeast)).